The sequence spans 227 residues: UPF0441 protein YPO0661/y3517/YP_2976 (227 aa).

Positions 198 to 227 are disordered; it reads GGFGESVAKQSSMQRSAATSSKTTTRSMGG. A compositionally biased stretch (low complexity) spans 212–227; sequence RSAATSSKTTTRSMGG.

The protein belongs to the UPF0441 family.

In Yersinia pestis, this protein is UPF0441 protein YPO0661/y3517/YP_2976.